The chain runs to 168 residues: Photosystem I assembly protein Ycf3 (168 aa).

3 TPR repeats span residues 35-68 (AFTYYRDGMSAQSEGNYAEALQNYYEAMRLEIDP), 72-105 (SYILYNIGLIHTSNGEHTKALEYYFRALERNPFL), and 120-153 (GEQAIRQGDSEIAEAWFDQAAEYWKQAIALTPGN).

Belongs to the Ycf3 family.

The protein localises to the plastid. The protein resides in the chloroplast thylakoid membrane. Its function is as follows. Essential for the assembly of the photosystem I (PSI) complex. May act as a chaperone-like factor to guide the assembly of the PSI subunits. This chain is Photosystem I assembly protein Ycf3, found in Populus alba (White poplar).